The chain runs to 424 residues: Adenylyltransferase and sulfurtransferase UBA4 (424 aa).

ATP-binding positions include Gly76, Asp97, 104 to 108 (TNLHR), Lys121, and 165 to 166 (DS). Zn(2+) contacts are provided by Cys206 and Cys209. Residue Cys223 is the Glycyl thioester intermediate; for adenylyltransferase activity of the active site. A Zn(2+)-binding site is contributed by Cys283. In terms of domain architecture, Rhodanese spans 326-422 (RNSDHVLLDV…WYSEVDQNIP (97 aa)). Catalysis depends on Cys382, which acts as the Cysteine persulfide intermediate; for sulfurtransferase activity.

In the N-terminal section; belongs to the HesA/MoeB/ThiF family. UBA4 subfamily. Zn(2+) serves as cofactor.

The protein localises to the cytoplasm. It is found in the cytosol. It participates in tRNA modification; 5-methoxycarbonylmethyl-2-thiouridine-tRNA biosynthesis. In terms of biological role, plays a central role in 2-thiolation of mcm(5)S(2)U at tRNA wobble positions of cytosolic tRNA(Lys), tRNA(Glu) and tRNA(Gln). Acts by mediating the C-terminal thiocarboxylation of sulfur carrier URM1. Its N-terminus first activates URM1 as acyl-adenylate (-COAMP), then the persulfide sulfur on the catalytic cysteine is transferred to URM1 to form thiocarboxylation (-COSH) of its C-terminus. The reaction probably involves hydrogen sulfide that is generated from the persulfide intermediate and that acts as a nucleophile towards URM1. Subsequently, a transient disulfide bond is formed. Does not use thiosulfate as sulfur donor; NFS1 probably acting as a sulfur donor for thiocarboxylation reactions. Prior mcm(5) tRNA modification by the elongator complex is required for 2-thiolation. May also be involved in protein urmylation. The polypeptide is Adenylyltransferase and sulfurtransferase UBA4 (Meyerozyma guilliermondii (strain ATCC 6260 / CBS 566 / DSM 6381 / JCM 1539 / NBRC 10279 / NRRL Y-324) (Yeast)).